A 949-amino-acid chain; its full sequence is Bifunctional glutamine synthetase adenylyltransferase/adenylyl-removing enzyme (949 aa).

Residues Met-1–Asp-450 are adenylyl removase. The interval Asn-455 to Ile-949 is adenylyl transferase.

It belongs to the GlnE family. The cofactor is Mg(2+).

It carries out the reaction [glutamine synthetase]-O(4)-(5'-adenylyl)-L-tyrosine + phosphate = [glutamine synthetase]-L-tyrosine + ADP. It catalyses the reaction [glutamine synthetase]-L-tyrosine + ATP = [glutamine synthetase]-O(4)-(5'-adenylyl)-L-tyrosine + diphosphate. Its function is as follows. Involved in the regulation of glutamine synthetase GlnA, a key enzyme in the process to assimilate ammonia. When cellular nitrogen levels are high, the C-terminal adenylyl transferase (AT) inactivates GlnA by covalent transfer of an adenylyl group from ATP to specific tyrosine residue of GlnA, thus reducing its activity. Conversely, when nitrogen levels are low, the N-terminal adenylyl removase (AR) activates GlnA by removing the adenylyl group by phosphorolysis, increasing its activity. The regulatory region of GlnE binds the signal transduction protein PII (GlnB) which indicates the nitrogen status of the cell. This chain is Bifunctional glutamine synthetase adenylyltransferase/adenylyl-removing enzyme, found in Shewanella frigidimarina (strain NCIMB 400).